Consider the following 558-residue polypeptide: CTP synthase (558 aa).

Positions 1 to 266 (MSAKYIFVTG…DRLVMKYLRL (266 aa)) are amidoligase domain. Serine 14 contacts CTP. Serine 14 is a UTP binding site. ATP is bound by residues 15–20 (SLGKGL) and aspartate 72. Mg(2+) contacts are provided by aspartate 72 and glutamate 140. Residues 147–149 (DIE), 187–192 (KTKPTQ), and lysine 223 contribute to the CTP site. Residues 187–192 (KTKPTQ) and lysine 223 contribute to the UTP site. 239–241 (KDV) is a binding site for ATP. A Glutamine amidotransferase type-1 domain is found at 291–537 (IIGIIGKYVE…IGASYEHRMK (247 aa)). Glycine 355 is an L-glutamine binding site. Cysteine 382 serves as the catalytic Nucleophile; for glutamine hydrolysis. L-glutamine-binding positions include 383–386 (LGMQ), glutamate 406, and arginine 463. Catalysis depends on residues histidine 510 and glutamate 512. A disordered region spans residues 539 to 558 (THTKEREEESVFLRPERVGK). Over residues 542–558 (KEREEESVFLRPERVGK) the composition is skewed to basic and acidic residues.

Belongs to the CTP synthase family. In terms of assembly, homotetramer.

The enzyme catalyses UTP + L-glutamine + ATP + H2O = CTP + L-glutamate + ADP + phosphate + 2 H(+). It catalyses the reaction L-glutamine + H2O = L-glutamate + NH4(+). The catalysed reaction is UTP + NH4(+) + ATP = CTP + ADP + phosphate + 2 H(+). Its pathway is pyrimidine metabolism; CTP biosynthesis via de novo pathway; CTP from UDP: step 2/2. With respect to regulation, allosterically activated by GTP, when glutamine is the substrate; GTP has no effect on the reaction when ammonia is the substrate. The allosteric effector GTP functions by stabilizing the protein conformation that binds the tetrahedral intermediate(s) formed during glutamine hydrolysis. Inhibited by the product CTP, via allosteric rather than competitive inhibition. Functionally, catalyzes the ATP-dependent amination of UTP to CTP with either L-glutamine or ammonia as the source of nitrogen. Regulates intracellular CTP levels through interactions with the four ribonucleotide triphosphates. This is CTP synthase from Koribacter versatilis (strain Ellin345).